The following is a 412-amino-acid chain: Carboxypeptidase B1 (412 aa).

An N-terminal signal peptide occupies residues 1–18 (MIPRIVVVLLSVLAVVTA). The propeptide at 19–75 (RRSYEGYKVYGIVPESPDEAEILYQIRQSNPDLDFWHLTKQPGDEARVLVAPKDQRS) is activation peptide. The Peptidase M14 domain maps to 118–408 (SYLRHNEINE…VGIKAMALKV (291 aa)). Zn(2+) is bound by residues His175 and Glu178. 175–178 (HARE) is an a peptide binding site. Asn205 is a glycosylation site (N-linked (GlcNAc...) asparagine). A peptide-binding positions include Arg230 and 246–247 (NR). A disulfide bond links Cys240 and Cys263. Residue His299 participates in Zn(2+) binding. Residues 300–301 (SY) and Tyr351 each bind a peptide. Catalysis depends on Glu374, which acts as the Proton donor/acceptor. Asn395 carries an N-linked (GlcNAc...) asparagine glycan.

It belongs to the peptidase M14 family. As to quaternary structure, monomer. Interacts with Dengue virus type 2 (DENV2, MY89-88549 strain) envelope protein E. Interacts with Dengue virus envelope protein E type 3, type 2, type 4 and type 1 with decreasing strength. Requires Zn(2+) as cofactor. Expressed in midgut (at protein level).

It localises to the endoplasmic reticulum. It carries out the reaction Preferential release of a C-terminal lysine or arginine amino acid.. With respect to regulation, inhibited by S.tuberosum metallocarboxypeptidase inhibitor. In terms of biological role, carboxypeptidase that preferentially hydrolyzes arginine and lysine residues at the C-terminus. During infection by dengue virus, may play a role in preventing viral packaging, maturation, and release from the midgut. The sequence is that of Carboxypeptidase B1 from Aedes aegypti (Yellowfever mosquito).